Here is a 63-residue protein sequence, read N- to C-terminus: Large ribosomal subunit protein uL29 (63 aa).

This sequence belongs to the universal ribosomal protein uL29 family.

This Pseudoalteromonas atlantica (strain T6c / ATCC BAA-1087) protein is Large ribosomal subunit protein uL29.